A 316-amino-acid chain; its full sequence is UPF0613 protein PB24D3.06c (316 aa).

It belongs to the UPF0613 family.

It is found in the cytoplasm. It localises to the nucleus. This Schizosaccharomyces pombe (strain 972 / ATCC 24843) (Fission yeast) protein is UPF0613 protein PB24D3.06c.